The following is a 247-amino-acid chain: Orotidine 5'-phosphate decarboxylase (247 aa).

Residues D22, K44, 71-80 (DLKFHDIPNT), T131, R192, Q201, G221, and R222 contribute to the substrate site. The active-site Proton donor is K73.

This sequence belongs to the OMP decarboxylase family. Type 1 subfamily. In terms of assembly, homodimer.

It catalyses the reaction orotidine 5'-phosphate + H(+) = UMP + CO2. Its pathway is pyrimidine metabolism; UMP biosynthesis via de novo pathway; UMP from orotate: step 2/2. Functionally, catalyzes the decarboxylation of orotidine 5'-monophosphate (OMP) to uridine 5'-monophosphate (UMP). The chain is Orotidine 5'-phosphate decarboxylase from Pectobacterium carotovorum subsp. carotovorum (strain PC1).